The chain runs to 115 residues: NADH-ubiquinone oxidoreductase chain 3 (115 aa).

A run of 3 helical transmembrane segments spans residues 4 to 24 (FIVL…AFWL), 55 to 75 (FFLV…LLPL), and 87 to 107 (TMLT…YEWL).

It belongs to the complex I subunit 3 family. As to quaternary structure, core subunit of respiratory chain NADH dehydrogenase (Complex I) which is composed of 45 different subunits. Interacts with TMEM186. Interacts with TMEM242.

The protein localises to the mitochondrion inner membrane. The catalysed reaction is a ubiquinone + NADH + 5 H(+)(in) = a ubiquinol + NAD(+) + 4 H(+)(out). Its function is as follows. Core subunit of the mitochondrial membrane respiratory chain NADH dehydrogenase (Complex I) which catalyzes electron transfer from NADH through the respiratory chain, using ubiquinone as an electron acceptor. Essential for the catalytic activity of complex I. The polypeptide is NADH-ubiquinone oxidoreductase chain 3 (Reithrodontomys megalotis (Western harvest mouse)).